Here is a 409-residue protein sequence, read N- to C-terminus: Arginine biosynthesis bifunctional protein ArgJ (409 aa).

Thr165, Lys191, Thr202, Glu282, Asn404, and Thr409 together coordinate substrate. Thr202 (nucleophile) is an active-site residue.

Belongs to the ArgJ family. In terms of assembly, heterotetramer of two alpha and two beta chains.

Its subcellular location is the cytoplasm. It catalyses the reaction N(2)-acetyl-L-ornithine + L-glutamate = N-acetyl-L-glutamate + L-ornithine. The enzyme catalyses L-glutamate + acetyl-CoA = N-acetyl-L-glutamate + CoA + H(+). Its pathway is amino-acid biosynthesis; L-arginine biosynthesis; L-ornithine and N-acetyl-L-glutamate from L-glutamate and N(2)-acetyl-L-ornithine (cyclic): step 1/1. It functions in the pathway amino-acid biosynthesis; L-arginine biosynthesis; N(2)-acetyl-L-ornithine from L-glutamate: step 1/4. Its function is as follows. Catalyzes two activities which are involved in the cyclic version of arginine biosynthesis: the synthesis of N-acetylglutamate from glutamate and acetyl-CoA as the acetyl donor, and of ornithine by transacetylation between N(2)-acetylornithine and glutamate. This chain is Arginine biosynthesis bifunctional protein ArgJ, found in Parasynechococcus marenigrum (strain WH8102).